A 121-amino-acid polypeptide reads, in one-letter code: Secretin (121 aa).

A signal peptide spans 1-18 (MAPRPLLLLLLLLGGSAA). A propeptide spanning residues 19 to 26 (RPAPPRAR) is cleaved from the precursor. The residue at position 54 (Val54) is a Valine amide. A Phosphoserine modification is found at Ser58. The propeptide occupies 58–121 (SEQDAENSMA…AAAEGTLRPR (64 aa)).

This sequence belongs to the glucagon family.

It is found in the secreted. In terms of biological role, hormone involved in different processes, such as regulation of the pH of the duodenal content, food intake and water homeostasis. Exerts its biological effects by binding to secretin receptor (SCTR), a G-protein coupled receptor expressed in the basolateral domain of several cells. Acts as a key gastrointestinal hormone by regulating the pH of the duodenal content. Secreted by S cells of the duodenum in the crypts of Lieberkuehn and regulates the pH of the duodenum by (1) inhibiting the secretion of gastric acid from the parietal cells of the stomach and (2) stimulating the production of bicarbonate (NaHCO(3)) from the ductal cells of the pancreas. Production of bicarbonate is essential to neutralize the pH and ensure no damage is done to the small intestine by the gastric acid. In addition to regulating the pH of the duodenal content, plays a central role in diet induced thermogenesis: acts as a non-sympathetic brown fat (BAT) activator mediating prandial thermogenesis, which consequentially induces satiation. Mechanistically, secretin released by the gut after a meal binds to secretin receptor (SCTR) in brown adipocytes, activating brown fat thermogenesis by stimulating lipolysis, which is sensed in the brain and promotes satiation. Also able to stimulate lipolysis in white adipocytes. Also plays an important role in cellular osmoregulation: released into the systemic circulation in response to hyperosmolality and acts at different levels in the hypothalamus, pituitary and kidney to regulate water homeostasis. Also plays a role in the central nervous system, possibly by acting as a neuropeptide hormone: required for hippocampal synaptic function and neural progenitor cells maintenance. This is Secretin from Homo sapiens (Human).